The chain runs to 411 residues: uncharacterized protein (411 aa).

This is an uncharacterized protein from Magallana gigas (Pacific oyster).